A 100-amino-acid polypeptide reads, in one-letter code: Urease subunit gamma (100 aa).

Belongs to the urease gamma subunit family. As to quaternary structure, heterotrimer of UreA (gamma), UreB (beta) and UreC (alpha) subunits. Three heterotrimers associate to form the active enzyme.

It localises to the cytoplasm. The enzyme catalyses urea + 2 H2O + H(+) = hydrogencarbonate + 2 NH4(+). Its pathway is nitrogen metabolism; urea degradation; CO(2) and NH(3) from urea (urease route): step 1/1. The chain is Urease subunit gamma from Opitutus terrae (strain DSM 11246 / JCM 15787 / PB90-1).